Here is a 252-residue protein sequence, read N- to C-terminus: Secreted LysM effector LysM1 (252 aa).

The LysM 1 domain maps to 20–64 (FAIPGDPGDTCDTLSDRWGITIDIFKSLNPGVNCPNLVANMEYCV). The tract at residues 71-98 (DTPSTTTTAKPTMTPTSTPTKTTTTSTA) is disordered. Over residues 72–98 (TPSTTTTAKPTMTPTSTPTKTTTTSTA) the composition is skewed to low complexity. 2 consecutive LysM domains span residues 126-172 (KFHL…YVCV) and 204-250 (KFHL…YVCI).

This sequence belongs to the secreted LysM effector family.

It is found in the secreted. It localises to the cell wall. Functionally, secreted effector that binds two substrates, chitin and N-linked oligosaccharides associated with human skin glycoproteins. Could provide the pathogen with three important functions including shielding host cell wall chitin from the human immune system, shielding the pathogen's glycoproteins from host degradation and immune surveillance, and helping facilitate pathogen adhesion to human skin. This is Secreted LysM effector LysM1 from Trichophyton rubrum (strain ATCC MYA-4607 / CBS 118892) (Athlete's foot fungus).